Consider the following 487-residue polypeptide: N-succinylglutamate 5-semialdehyde dehydrogenase (487 aa).

A disordered region spans residues 1 to 23; that stretch reads MTHFIKGQWHTGKGHDVASSNPA. 220–225 is a binding site for NAD(+); sequence GSSRTG. Catalysis depends on residues Glu-243 and Cys-277.

The protein belongs to the aldehyde dehydrogenase family. AstD subfamily.

It catalyses the reaction N-succinyl-L-glutamate 5-semialdehyde + NAD(+) + H2O = N-succinyl-L-glutamate + NADH + 2 H(+). It functions in the pathway amino-acid degradation; L-arginine degradation via AST pathway; L-glutamate and succinate from L-arginine: step 4/5. Catalyzes the NAD-dependent reduction of succinylglutamate semialdehyde into succinylglutamate. The protein is N-succinylglutamate 5-semialdehyde dehydrogenase of Shewanella oneidensis (strain ATCC 700550 / JCM 31522 / CIP 106686 / LMG 19005 / NCIMB 14063 / MR-1).